Here is a 609-residue protein sequence, read N- to C-terminus: Kelch-like protein 20 (609 aa).

The region spanning 68–135 is the BTB domain; the sequence is CDVVLVVGAK…AYTSQITVEE (68 aa). Residues 170 to 272 form the BACK domain; the sequence is CLGIRAFADT…SPKFLVGTVG (103 aa). Kelch repeat units follow at residues 319–365, 367–413, 414–460, 462–507, 509–554, and 556–601; these read VLFA…VLDD, LYAV…VLGG, FLYA…VLGG, LYAV…VYQD, IYAV…VVNG, and LMAV…VIKM.

As to quaternary structure, component of the BCR(KLHL20) E3 ubiquitin ligase complex, at least composed of CUL3, KLHL20 and RBX1. Interacts with PDZ-RhoGEF/ARHGEF11, DAPK1, PML and CORO7. Interacts with F-actin. Interacts with IFN-gamma (IFNG). Interacts (via kelch repeats) with IVNS1ABP (via kelch repeats); this interaction blocks the assembly of CUL3-KLHL20 complex.

The protein localises to the cytoplasm. Its subcellular location is the perinuclear region. It is found in the nucleus. It localises to the golgi apparatus. The protein resides in the trans-Golgi network. The protein localises to the cell projection. Its subcellular location is the axon. It is found in the dendrite. The protein operates within protein modification; protein ubiquitination. Substrate-specific adapter of a BCR (BTB-CUL3-RBX1) E3 ubiquitin-protein ligase complex involved in interferon response and anterograde Golgi to endosome transport. The BCR(KLHL20) E3 ubiquitin ligase complex mediates the ubiquitination of DAPK1, leading to its degradation by the proteasome, thereby acting as a negative regulator of apoptosis. The BCR(KLHL20) E3 ubiquitin ligase complex also specifically mediates 'Lys-33'-linked ubiquitination. Involved in anterograde Golgi to endosome transport by mediating 'Lys-33'-linked ubiquitination of CORO7, promoting interaction between CORO7 and EPS15, thereby facilitating actin polymerization and post-Golgi trafficking. Also acts as a regulator of endothelial migration during angiogenesis by controlling the activation of Rho GTPases. The BCR(KLHL20) E3 ubiquitin ligase complex acts as a regulator of neurite outgrowth by mediating ubiquitination and degradation of PDZ-RhoGEF/ARHGEF11. The polypeptide is Kelch-like protein 20 (KLHL20) (Pongo abelii (Sumatran orangutan)).